The sequence spans 152 residues: Antiholin-like protein LrgA (152 aa).

A run of 4 helical transmembrane segments spans residues Y23–E43, F45–C65, V77–I97, and I108–S128.

It belongs to the CidA/LrgA family. LrgA subfamily.

Its subcellular location is the cell membrane. Its function is as follows. Inhibits the expression or activity of extracellular murein hydrolases by interacting, possibly with LrgB, with the holin-like proteins CidA and/or CidB. The LrgAB and CidAB proteins may affect the proton motive force of the membrane. May be involved in programmed cell death (PCD), possibly triggering PCD in response to antibiotics and environmental stresses. The protein is Antiholin-like protein LrgA of Staphylococcus epidermidis (strain ATCC 12228 / FDA PCI 1200).